We begin with the raw amino-acid sequence, 435 residues long: uncharacterized protein (435 aa).

Phosphoserine is present on Ser-47. 2 disordered regions span residues 174–210 and 290–372; these read LKKK…DDED and KAEA…EDNK. Residues 195 to 210 are compositionally biased toward acidic residues; sequence NEEDEEDEEDEEDDED. Over residues 290-304 the composition is skewed to basic and acidic residues; that stretch reads KAEATGEAHSKDVSA. Over residues 308 to 318 the composition is skewed to polar residues; sequence SANTTTSFDET. Basic and acidic residues-rich tracts occupy residues 322–340 and 347–361; these read EDEK…KEAN and VADR…KVND.

It is found in the cytoplasm. This is an uncharacterized protein from Saccharomyces cerevisiae (strain ATCC 204508 / S288c) (Baker's yeast).